The primary structure comprises 238 residues: tRNA (guanine-N(7)-)-methyltransferase (238 aa).

S-adenosyl-L-methionine is bound by residues Glu68, Glu93, Asp120, and Asp143. Asp143 is an active-site residue. Substrate-binding positions include Lys147, Asp179, and 216 to 219; that span reads TKFE.

Belongs to the class I-like SAM-binding methyltransferase superfamily. TrmB family.

The catalysed reaction is guanosine(46) in tRNA + S-adenosyl-L-methionine = N(7)-methylguanosine(46) in tRNA + S-adenosyl-L-homocysteine. The protein operates within tRNA modification; N(7)-methylguanine-tRNA biosynthesis. Catalyzes the formation of N(7)-methylguanine at position 46 (m7G46) in tRNA. The polypeptide is tRNA (guanine-N(7)-)-methyltransferase (Shewanella amazonensis (strain ATCC BAA-1098 / SB2B)).